Here is a 181-residue protein sequence, read N- to C-terminus: Transmembrane protein 190 (181 aa).

The N-terminal stretch at 1 to 21 (MVASGIPALSLFLLMQGSVDG) is a signal peptide. Over 22–81 (NGIQGFFYPWSCEGDVWDRESCGGQAAIENPNLCLRLRCCYRDGVCYHQRPDETMRRKHM) the chain is Extracellular. A P-type domain is found at 31–71 (WSCEGDVWDRESCGGQAAIENPNLCLRLRCCYRDGVCYHQR). Intrachain disulfides connect Cys33/Cys61, Cys43/Cys60, and Cys55/Cys67. The chain crosses the membrane as a helical span at residues 82–102 (WALGWTCGGLLFLISSICLFW). The Cytoplasmic portion of the chain corresponds to 103 to 181 (WAKRRDMLHL…EETEGGEDED (79 aa)). A disordered region spans residues 135-181 (TLSDKKTSAGSVPTSLPTEGNADVSGATEGEGTTEGGEETEGGEDED). A compositionally biased stretch (polar residues) spans 142 to 152 (SAGSVPTSLPT). A compositionally biased stretch (acidic residues) spans 170 to 181 (GGEETEGGEDED).

Its subcellular location is the membrane. The sequence is that of Transmembrane protein 190 (TMEM190) from Canis lupus familiaris (Dog).